The sequence spans 322 residues: Arginase (322 aa).

His-113, Asp-141, His-143, and Asp-145 together coordinate Mn(2+). Substrate-binding positions include 143–147 (HADIN), 154–156 (SGN), and Asp-200. Mn(2+) contacts are provided by Asp-247 and Asp-249. The substrate site is built by Thr-261 and Glu-292.

The protein belongs to the arginase family. As to quaternary structure, homotrimer. The cofactor is Mn(2+).

The enzyme catalyses L-arginine + H2O = urea + L-ornithine. Its pathway is nitrogen metabolism; urea cycle; L-ornithine and urea from L-arginine: step 1/1. This Coccidioides immitis (strain RS) (Valley fever fungus) protein is Arginase (ARG).